A 62-amino-acid chain; its full sequence is Inner membrane protein p12 (62 aa).

A helical membrane pass occupies residues 16-36 (LLIVAIVVVIMAIMLYYFWWM).

The protein belongs to the asfivirus inner membrane protein p12 family. Homomultimer; disulfide-linked. Not glycosylated.

Its subcellular location is the virion membrane. The protein is Inner membrane protein p12 of African swine fever virus (isolate Pig/Kenya/KEN-50/1950) (ASFV).